The sequence spans 64 residues: Metallothionein (64 aa).

It belongs to the metallothionein superfamily. Type 4 family.

Functionally, metallothioneins have a high content of cysteine residues that bind various heavy metals. In Sterechinus neumayeri (Antarctic sea urchin), this protein is Metallothionein.